Here is a 293-residue protein sequence, read N- to C-terminus: Acetylglutamate kinase (293 aa).

Substrate-binding positions include G70–G71, R92, and N186.

This sequence belongs to the acetylglutamate kinase family. ArgB subfamily.

The protein resides in the cytoplasm. The enzyme catalyses N-acetyl-L-glutamate + ATP = N-acetyl-L-glutamyl 5-phosphate + ADP. It participates in amino-acid biosynthesis; L-arginine biosynthesis; N(2)-acetyl-L-ornithine from L-glutamate: step 2/4. Catalyzes the ATP-dependent phosphorylation of N-acetyl-L-glutamate. In Parasynechococcus marenigrum (strain WH8102), this protein is Acetylglutamate kinase.